Here is a 582-residue protein sequence, read N- to C-terminus: tRNA-guanine(15) transglycosylase (582 aa).

The Nucleophile role is filled by Asp95. Substrate is bound by residues Asp130 and Gly196. Zn(2+) contacts are provided by Cys279, Cys281, and Cys284. The 76-residue stretch at 507 to 582 folds into the PUA domain; it reads RMRVVVNKEA…RAVKVRKGVE (76 aa).

Belongs to the archaeosine tRNA-ribosyltransferase family. As to quaternary structure, homodimer. Zn(2+) serves as cofactor.

The catalysed reaction is guanosine(15) in tRNA + 7-cyano-7-deazaguanine = 7-cyano-7-carbaguanosine(15) in tRNA + guanine. The protein operates within tRNA modification; archaeosine-tRNA biosynthesis. Its function is as follows. Exchanges the guanine residue with 7-cyano-7-deazaguanine (preQ0) at position 15 in the dihydrouridine loop (D-loop) of archaeal tRNAs. The polypeptide is tRNA-guanine(15) transglycosylase (tgtA) (Pyrococcus horikoshii (strain ATCC 700860 / DSM 12428 / JCM 9974 / NBRC 100139 / OT-3)).